The sequence spans 350 residues: Histidinol-phosphate aminotransferase (350 aa).

Lysine 209 carries the N6-(pyridoxal phosphate)lysine modification.

It belongs to the class-II pyridoxal-phosphate-dependent aminotransferase family. Histidinol-phosphate aminotransferase subfamily. Homodimer. Pyridoxal 5'-phosphate serves as cofactor.

The enzyme catalyses L-histidinol phosphate + 2-oxoglutarate = 3-(imidazol-4-yl)-2-oxopropyl phosphate + L-glutamate. It functions in the pathway amino-acid biosynthesis; L-histidine biosynthesis; L-histidine from 5-phospho-alpha-D-ribose 1-diphosphate: step 7/9. The chain is Histidinol-phosphate aminotransferase from Christiangramia forsetii (strain DSM 17595 / CGMCC 1.15422 / KT0803) (Gramella forsetii).